A 198-amino-acid polypeptide reads, in one-letter code: Dual specificity protein phosphatase 13B (198 aa).

The region spanning 45-193 is the Tyrosine-protein phosphatase domain; the sequence is HINEVWPNLF…LQVLDNRLRR (149 aa). The active-site Phosphocysteine intermediate is cysteine 138.

Belongs to the protein-tyrosine phosphatase family. Non-receptor class dual specificity subfamily. Most abundantly expressed in the testis.

It catalyses the reaction O-phospho-L-tyrosyl-[protein] + H2O = L-tyrosyl-[protein] + phosphate. The enzyme catalyses O-phospho-L-seryl-[protein] + H2O = L-seryl-[protein] + phosphate. It carries out the reaction O-phospho-L-threonyl-[protein] + H2O = L-threonyl-[protein] + phosphate. Functionally, dual specificity phosphatase that dephosphorylates MAPK8/JNK and MAPK14/p38, but not MAPK1/ERK2, in vitro. Exhibits intrinsic phosphatase activity towards both phospho-seryl/threonyl and -tyrosyl residues, with similar specific activities in vitro. In Mus musculus (Mouse), this protein is Dual specificity protein phosphatase 13B.